The sequence spans 91 residues: Large ribosomal subunit protein eL34 (91 aa).

The disordered stretch occupies residues 48-71 (RGRPVEMRKLPKTKKRPERPYPHL).

It belongs to the eukaryotic ribosomal protein eL34 family.

The protein is Large ribosomal subunit protein eL34 (rpl34e) of Pyrococcus abyssi (strain GE5 / Orsay).